Here is a 363-residue protein sequence, read N- to C-terminus: Aminomethyltransferase (363 aa).

This sequence belongs to the GcvT family. The glycine cleavage system is composed of four proteins: P, T, L and H.

It catalyses the reaction N(6)-[(R)-S(8)-aminomethyldihydrolipoyl]-L-lysyl-[protein] + (6S)-5,6,7,8-tetrahydrofolate = N(6)-[(R)-dihydrolipoyl]-L-lysyl-[protein] + (6R)-5,10-methylene-5,6,7,8-tetrahydrofolate + NH4(+). The glycine cleavage system catalyzes the degradation of glycine. This is Aminomethyltransferase from Staphylococcus saprophyticus subsp. saprophyticus (strain ATCC 15305 / DSM 20229 / NCIMB 8711 / NCTC 7292 / S-41).